The primary structure comprises 512 residues: Rab11 family-interacting protein 2 (512 aa).

The region spanning 1 to 120 (MMLSEQAQKW…DKQRRKTEWF (120 aa)) is the C2 domain. The interval 15-102 (VQVTVLQAKD…GLDKFLGQVA (88 aa)) is necessary for its cellular translocation to the plasma membrane. 2 disordered regions span residues 169 to 239 (DKMK…MSSE) and 262 to 285 (VPESGSLKSPHRRTLSFDTSKMNQ). Over residues 178-188 (GTFSDTSSAII) the composition is skewed to polar residues. Positions 226–236 (HSMSDLSGSHM) are enriched in low complexity. Ser-227 is subject to Phosphoserine; by MARK2. Ser-277 is subject to Phosphoserine. The short motif at 323–325 (NPF) is the NPF 1 element. A compositionally biased stretch (basic and acidic residues) spans 361 to 374 (ERVTGKKDSRRSDK). A disordered region spans residues 361 to 392 (ERVTGKKDSRRSDKLNNGGSDSPCDLKSPNAF). 2 short sequence motifs (NPF) span residues 406-408 (NPF) and 440-442 (NPF). The 63-residue stretch at 437–499 (PDSNPFDATA…EETPSILRVP (63 aa)) folds into the FIP-RBD domain. Residues 465–512 (ELLRRKDTHIRELEDYIDNLLVRVMEETPSILRVPYEPSRKAGKFSNS) form a necessary for interaction with AP2A1, RAB11A, subcellular location, endocytosis activity and homooligomerization region.

Homooligomerizes in a Rab11-independent manner. Forms a heterooligomeric complex with RAB11FIP4. Interacts with AP2A1, MYO5B, RAB25 and REPS1. Interacts with RAB11A and RAB11B (activated GTP-bound form). Interacts with NPC1L1. Interacts (via NPF motifs) with EHD1 and EHD3. Interacts with TICAM2; this interaction directs RAB11FIP2 to the phagosome. Interacts with RAB14 and RAB25 (GTP-bound forms). Post-translationally, phosphorylation at Ser-227 by MARK2 regulates epithelial cell polarity.

The protein resides in the cell projection. Its subcellular location is the phagocytic cup. It localises to the cell membrane. The protein localises to the recycling endosome membrane. Functionally, a Rab11 effector binding preferentially phosphatidylinositol 3,4,5-trisphosphate (PtdInsP3) and phosphatidic acid (PA) and acting in the regulation of the transport of vesicles from the endosomal recycling compartment (ERC) to the plasma membrane. Involved in insulin granule exocytosis. Also involved in receptor-mediated endocytosis and membrane trafficking of recycling endosomes, probably originating from clathrin-coated vesicles. Required in a complex with MYO5B and RAB11 for the transport of NPC1L1 to the plasma membrane. Also acts as a regulator of cell polarity. Plays an essential role in phagocytosis through a mechanism involving TICAM2, RAC1 and CDC42 Rho GTPases for controlling actin-dynamics. The protein is Rab11 family-interacting protein 2 (RAB11FIP2) of Homo sapiens (Human).